A 132-amino-acid polypeptide reads, in one-letter code: Small ribosomal subunit protein uS11 (132 aa).

The protein belongs to the universal ribosomal protein uS11 family. As to quaternary structure, part of the 30S ribosomal subunit. Interacts with proteins S7 and S18. Binds to IF-3.

In terms of biological role, located on the platform of the 30S subunit, it bridges several disparate RNA helices of the 16S rRNA. Forms part of the Shine-Dalgarno cleft in the 70S ribosome. The protein is Small ribosomal subunit protein uS11 of Alkaliphilus metalliredigens (strain QYMF).